Consider the following 78-residue polypeptide: ATP synthase subunit c (78 aa).

2 helical membrane passes run 9–29 (AFIGAGLAMIAILGVGIGQGW) and 56–76 (AAVTETGALYCFIIAILLVFV).

The protein belongs to the ATPase C chain family. In terms of assembly, F-type ATPases have 2 components, F(1) - the catalytic core - and F(0) - the membrane proton channel. F(1) has five subunits: alpha(3), beta(3), gamma(1), delta(1), epsilon(1). F(0) has three main subunits: a(1), b(2) and c(10-14). The alpha and beta chains form an alternating ring which encloses part of the gamma chain. F(1) is attached to F(0) by a central stalk formed by the gamma and epsilon chains, while a peripheral stalk is formed by the delta and b chains.

The protein resides in the cell membrane. F(1)F(0) ATP synthase produces ATP from ADP in the presence of a proton or sodium gradient. F-type ATPases consist of two structural domains, F(1) containing the extramembraneous catalytic core and F(0) containing the membrane proton channel, linked together by a central stalk and a peripheral stalk. During catalysis, ATP synthesis in the catalytic domain of F(1) is coupled via a rotary mechanism of the central stalk subunits to proton translocation. In terms of biological role, key component of the F(0) channel; it plays a direct role in translocation across the membrane. A homomeric c-ring of between 10-14 subunits forms the central stalk rotor element with the F(1) delta and epsilon subunits. The sequence is that of ATP synthase subunit c from Malacoplasma penetrans (strain HF-2) (Mycoplasma penetrans).